Consider the following 106-residue polypeptide: Large ribosomal subunit protein P1 (106 aa).

The span at 66–76 shows a compositional bias: low complexity; sequence AQPQATQAQPA. The disordered stretch occupies residues 66–106; the sequence is AQPQATQAQPAAEEKKEEKKEEEKKGPSEEEIASGLASLFG. Residues 77–93 are compositionally biased toward basic and acidic residues; that stretch reads AEEKKEEKKEEEKKGPS.

Belongs to the eukaryotic ribosomal protein P1/P2 family. In terms of assembly, part of the 50S ribosomal subunit. Homodimer, it forms part of the ribosomal stalk which helps the ribosome interact with GTP-bound translation factors. Forms a heptameric uL10/P0(P1)2(P1)2(P1)2 complex, where uL10/P0 forms an elongated spine to which the P1 dimers bind in a sequential fashion.

Its function is as follows. Forms part of the ribosomal stalk, playing a central role in the interaction of the ribosome with GTP-bound translation factors. The protein is Large ribosomal subunit protein P1 of Saccharolobus solfataricus (strain ATCC 35092 / DSM 1617 / JCM 11322 / P2) (Sulfolobus solfataricus).